Consider the following 488-residue polypeptide: Dihydrolipoyl dehydrogenase, mitochondrial (488 aa).

The N-terminal 25 residues, 1–25, are a transit peptide targeting the mitochondrion; that stretch reads MLRINRISNLRTFGQRFFSTEQQDV. Residues 52–61, lysine 70, glycine 134, and 163–165 contribute to the FAD site; these read EKRGKLGGTC and TGS. Cysteine 61 and cysteine 66 form a disulfide bridge. Residues 200-207, glutamate 223, valine 257, and glycine 294 contribute to the NAD(+) site; that span reads GGGVIGLE. FAD-binding positions include aspartate 335 and 341 to 344; that span reads MLAH. The Proton acceptor role is filled by histidine 467.

It belongs to the class-I pyridine nucleotide-disulfide oxidoreductase family. It depends on FAD as a cofactor.

The protein resides in the mitochondrion matrix. It catalyses the reaction N(6)-[(R)-dihydrolipoyl]-L-lysyl-[protein] + NAD(+) = N(6)-[(R)-lipoyl]-L-lysyl-[protein] + NADH + H(+). In Dictyostelium discoideum (Social amoeba), this protein is Dihydrolipoyl dehydrogenase, mitochondrial (lpd).